Reading from the N-terminus, the 473-residue chain is Phenolic acid decarboxylase (473 aa).

Mn(2+) is bound by residues Asn-160, His-182, and Glu-224. Prenylated FMN is bound by residues 160–165 (NVGIYR) and 181–182 (QH). The active-site Proton donor is Glu-273.

Belongs to the UbiD family. YclC subfamily. Prenylated FMN is required as a cofactor. It depends on Mn(2+) as a cofactor.

It carries out the reaction 4-hydroxybenzoate + H(+) = phenol + CO2. It catalyses the reaction vanillate + H(+) = guaiacol + CO2. Functionally, involved in the non-oxidative decarboxylation and detoxification of phenolic derivatives under both aerobic and anaerobic conditions. Phenolic acid decarboxylase that catalyzes the reversible decarboxylation of 4-hydroxybenzoate and vanillate. Could also catalyze the decarboxylation of salicylate. Is not active on di- and tri-hydroxybenzoate derivatives. In Bacillus subtilis (strain 168), this protein is Phenolic acid decarboxylase.